A 61-amino-acid chain; its full sequence is UPF0337 protein LMOf2365_2190 (61 aa).

Positions methionine 1 to glutamate 61 are disordered.

The protein belongs to the UPF0337 (CsbD) family.

The chain is UPF0337 protein LMOf2365_2190 from Listeria monocytogenes serotype 4b (strain F2365).